The following is a 138-amino-acid chain: MGMGMMEVHLISGKGLQAHDPLNKPIDPYAEINFKGQERMSKVAKNAGPDPIWNEKFKFLVEYPGSGGDFHILFKVMDHDAIDGDDYIGDVKIDVQNLLAEGVRKGWSELPPRMYQVLAHKIYFKGEIEVGVFFQRQG.

The C2 domain maps to 1–108 (MGMGMMEVHL…LAEGVRKGWS (108 aa)). Ca(2+) is bound by residues D20, D27, D78, D80, and D86.

Requires Ca(2+) as cofactor. In terms of tissue distribution, sieve elements of leaves, stems, roots and flowers.

Functionally, binds to both sense and antisense RNA. Interacts with mesophyll plasmodesmata to mediate its own cell-to-cell transport and potentiate RNA trafficking. This Cucurbita maxima (Pumpkin) protein is 16 kDa phloem protein 2 (PP16-2).